The primary structure comprises 320 residues: MARNKIALIGSGMIGGTLAHVAAREELGDVILFDIAEGLPQGKGLDIAESTPVYGASVNLKGVNDYAGIAGADVCIVTAGVPRKPGMSRDDLLGINLKVMKAVGEGIKAHAPNAFVICITNPLDAMVWALQKFSGLPTEKVVGMAGVLDSSRFAYFLSEKTGVSVADIHAWTLGGHGDDMVPMVRHSTVGGLPLTQLVAQGWMSQAELDAIVERTRKGGGEIVNLLKTGSAYYAPAESAIAMAKSYLADQKRVLPVASYCSGQYGLKDMYVGVPTLIGAGGAEKIVEFDFNADEKAMFDKSVASVNGLIEACKGIDPSLA.

NAD(+) is bound by residues Gly-10–Gly-15 and Asp-34. Substrate contacts are provided by Arg-83 and Arg-89. Residues Asn-96 and Ile-119–Asn-121 contribute to the NAD(+) site. Substrate contacts are provided by Asn-121 and Arg-152. The active-site Proton acceptor is the His-176.

Belongs to the LDH/MDH superfamily. MDH type 3 family.

It carries out the reaction (S)-malate + NAD(+) = oxaloacetate + NADH + H(+). Catalyzes the reversible oxidation of malate to oxaloacetate. This is Malate dehydrogenase from Hyphomonas neptunium (strain ATCC 15444).